The primary structure comprises 604 residues: Deuterosome assembly protein 1 (604 aa).

Coiled coils occupy residues 14-59, 85-197, 226-278, and 336-399; these read CEAE…NAQT, MTQN…GKKQ, IIEK…ELQS, and QDQP…KQLK. At Ser-547 the chain carries Phosphoserine. Positions 558–601 form a coiled coil; that stretch reads AAQHFLLEEEKRAKELEKLLNTHIDELQRHTEFTLNKYSKLKQN.

The protein belongs to the CEP63 family. Interacts with CEP152; the interaction is mutually exclusive with CEP63.

Its subcellular location is the cytoplasm. Functionally, key structural component of the deuterosome, a structure that promotes de novo centriole amplification in multiciliated cells. Deuterosome-mediated centriole amplification occurs in terminally differentiated multiciliated cells and can generate more than 100 centrioles. Probably sufficient for the specification and formation of the deuterosome inner core. Interacts with CEP152 and recruits PLK4 to activate centriole biogenesis. In Homo sapiens (Human), this protein is Deuterosome assembly protein 1.